The following is a 181-amino-acid chain: Malignant T-cell-amplified sequence 1-A (181 aa).

The PUA domain maps to 92–171 (LPHQQVDKGA…IGIENIHYLN (80 aa)).

Belongs to the MCTS1 family.

It is found in the cytoplasm. Its function is as follows. Plays a role as translation enhancer and involved in cell cycle regulation. The protein is Malignant T-cell-amplified sequence 1-A (mcts1-a) of Xenopus laevis (African clawed frog).